The chain runs to 65 residues: Large ribosomal subunit protein bL35 (65 aa).

It belongs to the bacterial ribosomal protein bL35 family.

The chain is Large ribosomal subunit protein bL35 from Aromatoleum aromaticum (strain DSM 19018 / LMG 30748 / EbN1) (Azoarcus sp. (strain EbN1)).